The sequence spans 318 residues: cAMP/cGMP dual specificity phosphodiesterase MT0825 (318 aa).

Positions 21, 23, and 63 each coordinate Fe cation. AMP is bound by residues histidine 23, aspartate 63, and 97 to 98 (NH). Mn(2+)-binding residues include aspartate 63, asparagine 97, histidine 169, and histidine 207. Histidine 209 is a Fe cation binding site. Residue histidine 209 participates in AMP binding. The segment at 278 to 318 (PGQARRKIAESGIFIEPSRRDSLFKHPPMVLTSSAPRSPVD) is C-terminal extension.

The protein belongs to the cyclic nucleotide phosphodiesterase class-III family. Homodimer. Requires Fe(3+) as cofactor. It depends on Mn(2+) as a cofactor.

The protein resides in the cytoplasm. Its subcellular location is the cell membrane. It is found in the secreted. The protein localises to the cell wall. It localises to the cell envelope. It carries out the reaction a nucleoside 2',3'-cyclic phosphate + H2O = a nucleoside 3'-phosphate + H(+). The catalysed reaction is 2',3'-cyclophospho-AMP + H2O = 3'-AMP + H(+). The enzyme catalyses 2',3'-cyclophospho-GMP + H2O = 3'-GMP + H(+). It catalyses the reaction a nucleoside 3',5'-cyclic phosphate + H2O = a nucleoside 5'-phosphate + H(+). It carries out the reaction 3',5'-cyclic AMP + H2O = AMP + H(+). The catalysed reaction is 3',5'-cyclic GMP + H2O = GMP + H(+). Functionally, cyclic nucleotide phosphodiesterase with a dual-specificity for the second messengers cAMP and cGMP. The protein is cAMP/cGMP dual specificity phosphodiesterase MT0825 of Mycobacterium tuberculosis (strain CDC 1551 / Oshkosh).